The primary structure comprises 146 residues: Myoglobin (146 aa).

Residues 2-140 (ADLDAVLKCW…VIADLEANYK (139 aa)) form the Globin domain. His-59 is a nitrite binding site. His-59 is an O2 binding site. His-88 is a heme b binding site.

This sequence belongs to the globin family. Monomeric.

Its subcellular location is the cytoplasm. The protein localises to the sarcoplasm. The enzyme catalyses Fe(III)-heme b-[protein] + nitric oxide + H2O = Fe(II)-heme b-[protein] + nitrite + 2 H(+). It catalyses the reaction H2O2 + AH2 = A + 2 H2O. In terms of biological role, monomeric heme protein which primary function is to store oxygen and facilitate its diffusion within muscle tissues. Reversibly binds oxygen through a pentacoordinated heme iron and enables its timely and efficient release as needed during periods of heightened demand. Depending on the oxidative conditions of tissues and cells, and in addition to its ability to bind oxygen, it also has a nitrite reductase activity whereby it regulates the production of bioactive nitric oxide. Under stress conditions, like hypoxia and anoxia, it also protects cells against reactive oxygen species thanks to its pseudoperoxidase activity. The protein is Myoglobin (mb) of Katsuwonus pelamis (Skipjack tuna).